The primary structure comprises 94 residues: Small ribosomal subunit protein uS19 (94 aa).

It belongs to the universal ribosomal protein uS19 family.

Functionally, protein S19 forms a complex with S13 that binds strongly to the 16S ribosomal RNA. The polypeptide is Small ribosomal subunit protein uS19 (Acidobacterium capsulatum (strain ATCC 51196 / DSM 11244 / BCRC 80197 / JCM 7670 / NBRC 15755 / NCIMB 13165 / 161)).